The sequence spans 480 residues: Phosphomethylpyrimidine synthase (480 aa).

Substrate-binding positions include N66, M95, Y124, H159, 179–181 (SRG), 220–223 (DGLR), and E259. H263 is a Zn(2+) binding site. Residue Y286 coordinates substrate. A Zn(2+)-binding site is contributed by H327. 3 residues coordinate [4Fe-4S] cluster: C407, C410, and C415. The segment at 426-480 (DGDMESIEADADDRTPLEDSSAAAVNRPPVGTHDGADIPGPDADMPADTEGSADD) is disordered. A compositionally biased stretch (acidic residues) spans 470-480 (MPADTEGSADD).

It belongs to the ThiC family. Requires [4Fe-4S] cluster as cofactor.

It carries out the reaction 5-amino-1-(5-phospho-beta-D-ribosyl)imidazole + S-adenosyl-L-methionine = 4-amino-2-methyl-5-(phosphooxymethyl)pyrimidine + CO + 5'-deoxyadenosine + formate + L-methionine + 3 H(+). Its pathway is cofactor biosynthesis; thiamine diphosphate biosynthesis. In terms of biological role, catalyzes the synthesis of the hydroxymethylpyrimidine phosphate (HMP-P) moiety of thiamine from aminoimidazole ribotide (AIR) in a radical S-adenosyl-L-methionine (SAM)-dependent reaction. The polypeptide is Phosphomethylpyrimidine synthase (Haloarcula marismortui (strain ATCC 43049 / DSM 3752 / JCM 8966 / VKM B-1809) (Halobacterium marismortui)).